The chain runs to 109 residues: Matrix protein 2 (109 aa).

Over 1-4 (MLEP) the chain is Virion surface. Residues 5-27 (FQILSICSFILSALHFMAWTIGH) form a helical; Signal-anchor for type III membrane protein membrane-spanning segment. Residues 28–109 (LNQIKRGVNM…ETVLEIEELH (82 aa)) are Intravirion-facing. Residues 58–83 (HSYQKEIQAKETMKEVLSDNMEVLSD) adopt a coiled-coil conformation.

Homotetramer. Phosphorylated by host.

Its subcellular location is the virion membrane. The protein resides in the host cell membrane. Forms presumably a highly low-pH gated proton-selective channel. Trp-23 may function as a minimalistic gate that opens and closes the pore. When the environmental pH is lower than a threshold, the BM2 channel would be activated and selectively transport protons across the membrane from the extracellular side to the cytoplasmic side. Crucial for the uncoating process. When the virion is internalized into the endosome, the channel acidifies the virion's interior, promoting the dissociation of matrix protein 1 (M1) from the ribonucleoprotein (RNP) thus allowing the transport of the RNP from the virion into the cell's nucleus. Also plays a role in viral proteins secretory pathway. Elevates the intravesicular pH of normally acidic compartments, such as trans-Golgi network, preventing newly formed hemagglutinin from premature switching to the fusion-active conformation. Plays a crucial role in virion assembly. Expressed in the late phase of the infection. This chain is Matrix protein 2 (M), found in Influenza B virus (strain B/Memphis/12/1997).